A 134-amino-acid polypeptide reads, in one-letter code: Putative F-box protein R638 (134 aa).

In terms of domain architecture, F-box spans 5 to 52 (NIMNLLNEDCILHILSFLADKDKIQLSLSCKSNLKFLHKTIYDDIYFY).

The polypeptide is Putative F-box protein R638 (Acanthamoeba polyphaga mimivirus (APMV)).